Here is a 1069-residue protein sequence, read N- to C-terminus: Acyl-CoA dehydrogenase family member 10 (1069 aa).

An N6-succinyllysine modification is found at Lys413. N6-acetyllysine; alternate is present on Lys427. Lys427 bears the N6-succinyllysine; alternate mark. FAD contacts are provided by residues 792–802, Ser828, Arg943, Gln1013, and Glu1044; that span reads FAMTEPQVASS. Lys1052 is modified (N6-acetyllysine; alternate). The residue at position 1052 (Lys1052) is an N6-succinyllysine; alternate.

The protein belongs to the acyl-CoA dehydrogenase family. The cofactor is FAD.

The enzyme catalyses a 2,3-saturated acyl-CoA + A = a 2,3-dehydroacyl-CoA + AH2. Its function is as follows. Acyl-CoA dehydrogenase only active with R- and S-2-methyl-C15-CoA. In Mus musculus (Mouse), this protein is Acyl-CoA dehydrogenase family member 10 (Acad10).